The primary structure comprises 90 residues: Small ribosomal subunit protein uS15 (90 aa).

It belongs to the universal ribosomal protein uS15 family. As to quaternary structure, part of the 30S ribosomal subunit. Forms a bridge to the 50S subunit in the 70S ribosome, contacting the 23S rRNA.

Functionally, one of the primary rRNA binding proteins, it binds directly to 16S rRNA where it helps nucleate assembly of the platform of the 30S subunit by binding and bridging several RNA helices of the 16S rRNA. Forms an intersubunit bridge (bridge B4) with the 23S rRNA of the 50S subunit in the ribosome. This chain is Small ribosomal subunit protein uS15, found in Campylobacter jejuni subsp. doylei (strain ATCC BAA-1458 / RM4099 / 269.97).